A 209-amino-acid polypeptide reads, in one-letter code: MNKKKRFEILSLFYKKNSNPKIELVFSSDFELLLSVILSAKSTDVMVNKITGTLFQIANTPQSILKLGFNKLRHYIKSIGLYNTKSLNIINSAYLIKTKYNNKVPSNRTELESLPGVGRKTANIILNVLFNKNTIAVDTHVFRVANRTGFAKGKNVIEVEKKMIKIVPSIFKKYVHFWFVLHGRYVCTARQLKCKTCFIEKLCEFDKKK.

The 20-residue stretch at 108–127 (RTELESLPGVGRKTANIILN) folds into the HhH domain. Positions 187, 194, 197, and 203 each coordinate [4Fe-4S] cluster.

It belongs to the Nth/MutY family. The cofactor is [4Fe-4S] cluster.

It carries out the reaction 2'-deoxyribonucleotide-(2'-deoxyribose 5'-phosphate)-2'-deoxyribonucleotide-DNA = a 3'-end 2'-deoxyribonucleotide-(2,3-dehydro-2,3-deoxyribose 5'-phosphate)-DNA + a 5'-end 5'-phospho-2'-deoxyribonucleoside-DNA + H(+). Its function is as follows. DNA repair enzyme that has both DNA N-glycosylase activity and AP-lyase activity. The DNA N-glycosylase activity releases various damaged pyrimidines from DNA by cleaving the N-glycosidic bond, leaving an AP (apurinic/apyrimidinic) site. The AP-lyase activity cleaves the phosphodiester bond 3' to the AP site by a beta-elimination, leaving a 3'-terminal unsaturated sugar and a product with a terminal 5'-phosphate. The protein is Endonuclease III of Buchnera aphidicola subsp. Schizaphis graminum (strain Sg).